We begin with the raw amino-acid sequence, 412 residues long: FAD-dependent monooxygenase nscC (412 aa).

The N-terminal stretch at Met-1–Ser-21 is a signal peptide. FAD-binding residues include Glu-35 and Ala-46. Asn-92 is a glycosylation site (N-linked (GlcNAc...) asparagine). Arg-119 lines the FAD pocket. Asn-170 and Asn-231 each carry an N-linked (GlcNAc...) asparagine glycan. The FAD site is built by Asp-326 and Gly-339.

It belongs to the paxM FAD-dependent monooxygenase family. The cofactor is FAD.

It functions in the pathway secondary metabolite biosynthesis. FAD-dependent monooxygenase; part of the gene cluster that mediates the biosynthesis of neosartoricin B, a prenylated anthracenone that probably exhibits T-cell antiproliferative activity, suggestive of a physiological role as an immunosuppressive agent. The non-reducing polyketide synthase nscA probably synthesizes and cyclizes the decaketide backbone. The hydrolase nscB then mediates the product release through hydrolysis followed by spontaneous decarboxylation. The prenyltransferase nscD catalyzes the addition of the dimethylallyl group to the aromatic C5. The FAD-dependent monooxygenase nscC is then responsible for the stereospecific hydroxylation at C2. Neosartoricin B can be converted into two additional compounds neosartoricins C and D. Neosartoricin C is a spirocyclic compound that is cyclized through the attack of C3 hydroxyl on C14, followed by dehydration. On the other hand, neosartoricin D is a further cyclized compound in which attack of C2 on C14 in neosartoricin C results in the formation of the acetal-containing dioxabicyclo-octanone ring. Both of these compounds are novel and possibly represent related metabolites of the gene cluster. This chain is FAD-dependent monooxygenase nscC, found in Trichophyton tonsurans (strain CBS 112818) (Scalp ringworm fungus).